The sequence spans 235 residues: NADH-quinone oxidoreductase subunit C (235 aa).

The protein belongs to the complex I 30 kDa subunit family. As to quaternary structure, NDH-1 is composed of 14 different subunits. Subunits NuoB, C, D, E, F, and G constitute the peripheral sector of the complex.

Its subcellular location is the cell membrane. The enzyme catalyses a quinone + NADH + 5 H(+)(in) = a quinol + NAD(+) + 4 H(+)(out). Functionally, NDH-1 shuttles electrons from NADH, via FMN and iron-sulfur (Fe-S) centers, to quinones in the respiratory chain. The immediate electron acceptor for the enzyme in this species is believed to be a menaquinone. Couples the redox reaction to proton translocation (for every two electrons transferred, four hydrogen ions are translocated across the cytoplasmic membrane), and thus conserves the redox energy in a proton gradient. This Mycobacterium avium (strain 104) protein is NADH-quinone oxidoreductase subunit C.